The following is a 439-amino-acid chain: tRNA(Ile)-lysidine synthase (439 aa).

23 to 28 is a binding site for ATP; that stretch reads SGGLDS.

Belongs to the tRNA(Ile)-lysidine synthase family.

It localises to the cytoplasm. The enzyme catalyses cytidine(34) in tRNA(Ile2) + L-lysine + ATP = lysidine(34) in tRNA(Ile2) + AMP + diphosphate + H(+). Functionally, ligates lysine onto the cytidine present at position 34 of the AUA codon-specific tRNA(Ile) that contains the anticodon CAU, in an ATP-dependent manner. Cytidine is converted to lysidine, thus changing the amino acid specificity of the tRNA from methionine to isoleucine. This is tRNA(Ile)-lysidine synthase from Methylococcus capsulatus (strain ATCC 33009 / NCIMB 11132 / Bath).